The chain runs to 487 residues: MKITKPHVAMFASPGMGHIIPVIELGKRLAGSHGFDVTIFVLETDAASAQSQFLNSPGCDAALVDIVGLPTPDISGLVDPSAFFGIKLLVMMRETIPTIRSKIEEMQHKPTALIVDLFGLDAIPLGGEFNMLTYIFIASNARFLAVALFFPTLDKDMEEEHIIKKQPMVMPGCEPVRFEDTLETFLDPNSQLYREFVPFGSVFPTCDGIIVNTWDDMEPKTLKSLQDPKLLGRIAGVPVYPIGPLSRPVDPSKTNHPVLDWLNKQPDESVLYISFGSGGSLSAKQLTELAWGLEMSQQRFVWVVRPPVDGSACSAYLSANSGKIRDGTPDYLPEGFVSRTHERGFMVSSWAPQAEILAHQAVGGFLTHCGWNSILESVVGGVPMIAWPLFAEQMMNATLLNEELGVAVRSKKLPSEGVITRAEIEALVRKIMVEEEGAEMRKKIKKLKETAAESLSCDGGVAHESLSRIADESEHLLERVRCMARGA.

His-18 functions as the Proton acceptor in the catalytic mechanism. An an anthocyanidin-binding site is contributed by His-18. Catalysis depends on Asp-116, which acts as the Charge relay. 7 residues coordinate UDP-alpha-D-glucose: Ala-351, Gln-353, His-368, Trp-371, Asn-372, Ser-373, and Glu-376. An an anthocyanidin-binding site is contributed by Ala-391. Glu-392 and Gln-393 together coordinate UDP-alpha-D-glucose.

This sequence belongs to the UDP-glycosyltransferase family. In terms of assembly, interacts with SIS8. As to expression, expressed in seedlings, roots and leaves.

It localises to the nucleus. It carries out the reaction (E)-coniferaldehyde + UDP-alpha-D-glucose = 4-O-(beta-D-glucosyl)-4-(E)-coniferyl aldehyde + UDP + H(+). The enzyme catalyses (E)-sinapaldehyde + UDP-alpha-D-glucose = 4-O-(beta-D-glucosyl)-4-trans-sinapoyl aldehyde + UDP + H(+). In terms of biological role, UDP-glycosyltransferase that glucosylates coniferyl aldehyde to form coniferyl aldehyde 4-O-glucoside. Glucosylates sinapyl aldehyde to form sinapyl aldehyde 4-O-glucoside. Is not active in presence of coniferyl alcohol or sinapyl alcohol. Can glucosylate the phytotoxic xenobiotic compound 2,4,5-trichlorophenol (TCP). The chain is UDP-glycosyltransferase 72E1 from Arabidopsis thaliana (Mouse-ear cress).